A 679-amino-acid polypeptide reads, in one-letter code: MEKHFKRTLITTALPYANGPVHIGHLAGVYVPADIYARYLRLKGEEVLMIGGSDEHGVPITLRAKKEGITPQDVVDRYHGIIKKSFEEFGITFDIYSRTTSATHHQMASDFFRTLYDKGEFIEKTSEQYYDEEAKQFLADRYIMGTCPHCGNEKAYGDQCEACGTSLSPTDLIDPKSAISGSKPVMRETKHWYLPLDKWEPFLRKWILEDHKEWKPNVYGQCKSWLDMGLQPRAVSRDLDWGIPVPVEGAEGKVLYVWFDAPIGYISNTKELLPDSWETWWKDPETKMVHFIGKDNIVFHCIVFPSMLKAEGSYNLPENVPANEFLNLEGDKISTSRNWAVWLNEYLVDMPGKQDVLRYVLTANAPETKDNDFTWKDFQARNNNELVAILGNFVNRALVLTDKYFEGKVPVAGELTDYDRQTLKDFADVKENVERLLDTYHFRDAQKEAMNLARIGNKYLADMEPWKLAKTDMPRVATIMNIALQITANLAIAFEPFLPFSMEKLNKMLNVEPLGWNRLGATDLLEAGHQLGKAELLFEKIEDSVIEAQVQKLLDTKKANEEANYKAKPIRENIEFDDFMKLDIRVGTVLECVKVPKADKLLQFRIDDGLEKRTIVSGIAQHYKPEELVGKQVCFIANLAPRKLKGIVSEGMILSAENFDGKLAVITPEKEVKPGSEVK.

Residues 15 to 25 (PYANGPVHIGH) carry the 'HIGH' region motif. 4 residues coordinate Zn(2+): Cys-147, Cys-150, Cys-160, and Cys-163. The short motif at 332 to 336 (KISTS) is the 'KMSKS' region element. ATP is bound at residue Thr-335. In terms of domain architecture, tRNA-binding spans 578 to 679 (DFMKLDIRVG…KEVKPGSEVK (102 aa)).

This sequence belongs to the class-I aminoacyl-tRNA synthetase family. MetG type 1 subfamily. As to quaternary structure, homodimer. It depends on Zn(2+) as a cofactor.

Its subcellular location is the cytoplasm. The catalysed reaction is tRNA(Met) + L-methionine + ATP = L-methionyl-tRNA(Met) + AMP + diphosphate. Is required not only for elongation of protein synthesis but also for the initiation of all mRNA translation through initiator tRNA(fMet) aminoacylation. The chain is Methionine--tRNA ligase from Parabacteroides distasonis (strain ATCC 8503 / DSM 20701 / CIP 104284 / JCM 5825 / NCTC 11152).